Here is a 173-residue protein sequence, read N- to C-terminus: Transcription factor E (173 aa).

Residues 3–88 (NNPIIQQVLL…TWRATFTKLP (86 aa)) enclose the HTH TFE/IIEalpha-type domain.

The protein belongs to the TFE family. As to quaternary structure, monomer. Interaction with RNA polymerase subunits RpoF and RpoE is necessary for Tfe stimulatory transcription activity. Able to interact with Tbp and RNA polymerase in the absence of DNA promoter. Interacts both with the preinitiation and elongation complexes.

Its function is as follows. Transcription factor that plays a role in the activation of archaeal genes transcribed by RNA polymerase. Facilitates transcription initiation by enhancing TATA-box recognition by TATA-box-binding protein (Tbp), and transcription factor B (Tfb) and RNA polymerase recruitment. Not absolutely required for transcription in vitro, but particularly important in cases where Tbp or Tfb function is not optimal. It dynamically alters the nucleic acid-binding properties of RNA polymerases by stabilizing the initiation complex and destabilizing elongation complexes. Seems to translocate with the RNA polymerase following initiation and acts by binding to the non template strand of the transcription bubble in elongation complexes. The protein is Transcription factor E of Methanococcus aeolicus (strain ATCC BAA-1280 / DSM 17508 / OCM 812 / Nankai-3).